Reading from the N-terminus, the 716-residue chain is Leucine-rich repeat neuronal protein 1 (716 aa).

Positions 1 to 25 (MARMSFVLAAYQMVLSLLMTSLTGS) are cleaved as a signal peptide. Positions 26–72 (SLQSSECPQLCVCEIRPWFTPQSTYREATTVDCNDLRLTRIPSNLSS) constitute an LRRNT domain. Over 26 to 631 (SLQSSECPQL…DISDQETSTA (606 aa)) the chain is Extracellular. Residue N69 is glycosylated (N-linked (GlcNAc...) asparagine). 9 LRR repeats span residues 73–95 (DTQV…QQLF), 96–117 (NLTE…GLAN), 120–141 (QLTT…CLQD), 144–165 (NLQE…AFSG), 168–189 (NLLR…WFDS), 192–213 (NLEI…NFKP), 216–237 (NLRS…ALVG), 240–261 (SLES…ALQK), and 264–285 (NLKF…DFKN). N-linked (GlcNAc...) asparagine glycans are attached at residues N96, N106, and N117. An LRRCT domain is found at 371–424 (NPLRCDCVIHWINSNKTNIRFMEPLSMFCAMPPEYRGQQVKEVLIQDSSEQCLP). An N-linked (GlcNAc...) asparagine glycan is attached at N385. One can recognise an Ig-like C2-type domain in the interval 424 to 515 (PMISHDTFPN…GADTRVVMIK (92 aa)). An intrachain disulfide couples C447 to C499. N-linked (GlcNAc...) asparagine glycosylation is found at N517, N582, and N611. A Fibronectin type-III domain is found at 525-617 (QVLKIYVKQT…SCVNVTTKNA (93 aa)). The helical transmembrane segment at 632–652 (LAAVMGSMFAVISLASIAVYI) threads the bilayer. The Cytoplasmic segment spans residues 653 to 716 (AKRFKRKNYH…VDTSRSYYMW (64 aa)). Positions 691–700 (DSEKDKDGTA) are enriched in basic and acidic residues. Residues 691 to 716 (DSEKDKDGTADTKPTQVDTSRSYYMW) are disordered. The span at 702–716 (TKPTQVDTSRSYYMW) shows a compositional bias: polar residues.

It is found in the membrane. The chain is Leucine-rich repeat neuronal protein 1 (LRRN1) from Bos taurus (Bovine).